Consider the following 376-residue polypeptide: Alanine racemase (376 aa).

Lys40 functions as the Proton acceptor; specific for D-alanine in the catalytic mechanism. N6-(pyridoxal phosphate)lysine is present on Lys40. Residue Arg138 coordinates substrate. The active-site Proton acceptor; specific for L-alanine is Tyr270. Residue Met317 coordinates substrate.

It belongs to the alanine racemase family. It depends on pyridoxal 5'-phosphate as a cofactor.

It catalyses the reaction L-alanine = D-alanine. The protein operates within amino-acid biosynthesis; D-alanine biosynthesis; D-alanine from L-alanine: step 1/1. Functionally, catalyzes the interconversion of L-alanine and D-alanine. May also act on other amino acids. This Lactobacillus delbrueckii subsp. bulgaricus (strain ATCC 11842 / DSM 20081 / BCRC 10696 / JCM 1002 / NBRC 13953 / NCIMB 11778 / NCTC 12712 / WDCM 00102 / Lb 14) protein is Alanine racemase (alr).